The primary structure comprises 171 residues: AP-3 complex subunit sigma (171 aa).

It belongs to the adaptor complexes small subunit family. In terms of assembly, adaptor protein complex 3 (AP-3) is a heterotetramer composed of two large adaptins (delta-type subunit and beta-type subunit), a medium adaptin (mu-type subunit) and a small adaptin (sigma-type subunit).

The protein localises to the endosome membrane. Part of the AP-3 complex, an adaptor-related complex which is essential for the compartmentalization of the endocytic pathway. This Dictyostelium discoideum (Social amoeba) protein is AP-3 complex subunit sigma (ap3s1).